The following is a 689-amino-acid chain: Dipeptidyl aminopeptidase BIII (689 aa).

Positions 1 to 26 are cleaved as a signal peptide; it reads MRHPAFRLTLLASTVAFALAPQAAQA. Active-site charge relay system residues include Ser506, Asp593, and His625.

Belongs to the peptidase S9C family. In terms of assembly, monomer.

Strongly inhibited by the serine protease inhibitor diisopropyl fluorophosphate (DFP), chymostatin, leupeptin, 0.5 mM ZnCl(2), 10 mM o-phenanthlorine and N-tosyl-L-phenyl-alanyl chloromethyl ketone (TPCK), but not by N-tosyl-L-lysyl chloromethyl ketone (TLCK). Activity is not affected significantly by iodoacetate (IAA), L-trans-epoxysuccinyl-leucylamido(4-guanido)butane (E64), pepstatin A and phenylmethanesulfonyl fluoride (PMSF). Activity is stimulated by addition of 0.5 mM CaCl(2), 10 mM EDTA and N-ethylmaleimide (NEM). In terms of biological role, exopeptidase that catalyzes the removal of dipeptide units (NH2-P2-P1- or -P1'-P2'-COOH) from the free amino or carboxy termini. Prefers substrates composed of bulky, hydrophobic amino acids at P1 and P1' positions. Has endopeptidase activity on N-terminally blocked peptide derivatives which contain aromatic amino acid residue at the P1 position. Exopeptidase activity is much higher than its endopeptidase activity. This is Dipeptidyl aminopeptidase BIII from Pseudoxanthomonas mexicana.